Here is a 341-residue protein sequence, read N- to C-terminus: tRNA N6-adenosine threonylcarbamoyltransferase (341 aa).

Fe cation contacts are provided by His-111 and His-115. Substrate is bound by residues 134-138, Asp-167, Gly-180, and Asn-276; that span reads LVSGG. Asp-304 contacts Fe cation.

It belongs to the KAE1 / TsaD family. Fe(2+) is required as a cofactor.

It localises to the cytoplasm. It carries out the reaction L-threonylcarbamoyladenylate + adenosine(37) in tRNA = N(6)-L-threonylcarbamoyladenosine(37) in tRNA + AMP + H(+). Functionally, required for the formation of a threonylcarbamoyl group on adenosine at position 37 (t(6)A37) in tRNAs that read codons beginning with adenine. Is involved in the transfer of the threonylcarbamoyl moiety of threonylcarbamoyl-AMP (TC-AMP) to the N6 group of A37, together with TsaE and TsaB. TsaD likely plays a direct catalytic role in this reaction. In Azotobacter vinelandii (strain DJ / ATCC BAA-1303), this protein is tRNA N6-adenosine threonylcarbamoyltransferase.